Reading from the N-terminus, the 96-residue chain is Myoglobin (96 aa).

Residues 1–96 (GLSDGEWQLV…AKTKELGFLG (96 aa)) enclose the Globin domain. Serine 3 carries the phosphoserine modification. Residue histidine 61 coordinates nitrite. Histidine 61 is a binding site for O2. A Phosphothreonine modification is found at threonine 64.

Belongs to the globin family. In terms of assembly, monomeric.

The protein localises to the cytoplasm. It is found in the sarcoplasm. It catalyses the reaction Fe(III)-heme b-[protein] + nitric oxide + H2O = Fe(II)-heme b-[protein] + nitrite + 2 H(+). The catalysed reaction is H2O2 + AH2 = A + 2 H2O. Functionally, monomeric heme protein which primary function is to store oxygen and facilitate its diffusion within muscle tissues. Reversibly binds oxygen through a pentacoordinated heme iron and enables its timely and efficient release as needed during periods of heightened demand. Depending on the oxidative conditions of tissues and cells, and in addition to its ability to bind oxygen, it also has a nitrite reductase activity whereby it regulates the production of bioactive nitric oxide. Under stress conditions, like hypoxia and anoxia, it also protects cells against reactive oxygen species thanks to its pseudoperoxidase activity. The protein is Myoglobin (MB) of Ailuropoda melanoleuca (Giant panda).